A 682-amino-acid chain; its full sequence is UvrABC system protein B (682 aa).

A Helicase ATP-binding domain is found at 27-414 (DNIRAGVAHQ…SEGIVVEQII (388 aa)). Residue 40–47 (GVTGSGKT) coordinates ATP. Positions 93–116 (YYDYYQPEAYVPTSDTYIEKDSSI) match the Beta-hairpin motif. A Helicase C-terminal domain is found at 432–594 (QMEDLMTECR…IEPVSVRKSL (163 aa)). Residues 609-628 (AAKGRGKGRGRQAAPAQTAA) form a disordered region. One can recognise a UVR domain in the interval 642–677 (GGLIQRLEREMRESARDLEFEKAAELRDRIRMLRER).

Belongs to the UvrB family. As to quaternary structure, forms a heterotetramer with UvrA during the search for lesions. Interacts with UvrC in an incision complex.

It is found in the cytoplasm. The UvrABC repair system catalyzes the recognition and processing of DNA lesions. A damage recognition complex composed of 2 UvrA and 2 UvrB subunits scans DNA for abnormalities. Upon binding of the UvrA(2)B(2) complex to a putative damaged site, the DNA wraps around one UvrB monomer. DNA wrap is dependent on ATP binding by UvrB and probably causes local melting of the DNA helix, facilitating insertion of UvrB beta-hairpin between the DNA strands. Then UvrB probes one DNA strand for the presence of a lesion. If a lesion is found the UvrA subunits dissociate and the UvrB-DNA preincision complex is formed. This complex is subsequently bound by UvrC and the second UvrB is released. If no lesion is found, the DNA wraps around the other UvrB subunit that will check the other stand for damage. The protein is UvrABC system protein B of Oleidesulfovibrio alaskensis (strain ATCC BAA-1058 / DSM 17464 / G20) (Desulfovibrio alaskensis).